The chain runs to 274 residues: Probable glycerophosphodiester phosphodiesterase 1 (274 aa).

Residues 12–264 enclose the GP-PDE domain; that stretch reads PFVVAHRGAS…HHPGRTKAWL (253 aa). H17 functions as the Proton acceptor in the catalytic mechanism. 2 residues coordinate Ca(2+): E44 and D46. The active-site Proton donor is the H59. E126 is a binding site for Ca(2+).

It belongs to the glycerophosphoryl diester phosphodiesterase family. The cofactor is Ca(2+).

It catalyses the reaction a sn-glycero-3-phosphodiester + H2O = an alcohol + sn-glycerol 3-phosphate + H(+). In terms of biological role, glycerophosphodiester phosphodiesterase hydrolyzes glycerophosphodiesters into glycerol-3-phosphate (G3P) and the corresponding alcohol. In Mycobacterium tuberculosis (strain CDC 1551 / Oshkosh), this protein is Probable glycerophosphodiester phosphodiesterase 1 (glpQ1).